Here is a 223-residue protein sequence, read N- to C-terminus: Ubiquitin carboxyl-terminal hydrolase isozyme L1 (223 aa).

Residue methionine 1 is modified to N-acetylmethionine. The UCH catalytic domain occupies glutamine 2 to lysine 221. The interaction with ubiquitin stretch occupies residues proline 5–proline 10. Cysteine 90 acts as the Nucleophile in catalysis. Serine 125 is subject to Phosphoserine. Catalysis depends on histidine 161, which acts as the Proton donor. Residues glutamate 211–alanine 216 are interaction with ubiquitin. Cysteine 220 carries the S-farnesyl cysteine lipid modification. Residues lysine 221–alanine 223 constitute a propeptide, removed in mature form.

This sequence belongs to the peptidase C12 family. As to quaternary structure, monomer. Homodimer. Interacts with COPS5 and SNCA. Post-translationally, O-glycosylated. As to expression, expressed in brain, where it is found in neurons but not in oligodendrocytes or astrocytes. Found in the ganglion cell layer and the inner nuclear layer of the retina (at protein level). Expressed in brain and testis. In the brain, expression is at its lowest in replaceable neurons of hippocampus and olfactory bulb. Highly expressed in senescent pituitary. In skeletal muscle, primarily expressed in oxidative muscle fibers.

The protein resides in the cytoplasm. The protein localises to the endoplasmic reticulum membrane. The enzyme catalyses Thiol-dependent hydrolysis of ester, thioester, amide, peptide and isopeptide bonds formed by the C-terminal Gly of ubiquitin (a 76-residue protein attached to proteins as an intracellular targeting signal).. Its function is as follows. Deubiquitinase that plays a role in the regulation of several processes such as maintenance of synaptic function, cardiac function, inflammatory response or osteoclastogenesis. Abrogates the ubiquitination of multiple proteins including WWTR1/TAZ, EGFR, HIF1A and beta-site amyloid precursor protein cleaving enzyme 1/BACE1. In addition, recognizes and hydrolyzes a peptide bond at the C-terminal glycine of ubiquitin to maintain a stable pool of monoubiquitin that is a key requirement for the ubiquitin-proteasome and the autophagy-lysosome pathways. Regulates amyloid precursor protein/APP processing by promoting BACE1 degradation resulting in decreased amyloid beta production. Plays a role in the immune response by regulating the ability of MHC I molecules to reach cross-presentation compartments competent for generating Ag-MHC I complexes. Mediates the 'Lys-48'-linked deubiquitination of the transcriptional coactivator WWTR1/TAZ leading to its stabilization and inhibition of osteoclastogenesis. Deubiquitinates and stabilizes epidermal growth factor receptor EGFR to prevent its degradation and to activate its downstream mediators. Modulates oxidative activity in skeletal muscle by regulating key mitochondrial oxidative proteins. Enhances the activity of hypoxia-inducible factor 1-alpha/HIF1A by abrogateing its VHL E3 ligase-mediated ubiquitination and consequently inhibiting its degradation. The chain is Ubiquitin carboxyl-terminal hydrolase isozyme L1 (Uchl1) from Mus musculus (Mouse).